The following is a 332-amino-acid chain: Beta-1,3-N-acetylglucosaminyltransferase radical fringe (332 aa).

Topologically, residues 1–6 (MSRARR) are cytoplasmic. A helical; Signal-anchor for type II membrane protein membrane pass occupies residues 7 to 29 (VLCRACLALAAVLAVLLLLPLPL). Residues 30–332 (PLPLPRAPAP…MKNRVEGAFQ (303 aa)) are Lumenal-facing. R75 lines the substrate pocket. N114 carries N-linked (GlcNAc...) asparagine glycosylation. Intrachain disulfides connect C115-C126 and C144-C208. D148 is a substrate binding site. Position 149 (D149) interacts with Mn(2+). D238 is an active-site residue. Residue H262 participates in Mn(2+) binding. Cysteines 312 and 321 form a disulfide.

The protein belongs to the glycosyltransferase 31 family. It depends on Mn(2+) as a cofactor. As to expression, detected in all the examined tissues (12.5 dpc). High expression found in adult brain.

The protein localises to the golgi apparatus membrane. The catalysed reaction is 3-O-(alpha-L-fucosyl)-L-threonyl-[EGF-like domain protein] + UDP-N-acetyl-alpha-D-glucosamine = 3-O-(N-acetyl-beta-D-glucosaminyl-(1-&gt;3)-alpha-L-fucosyl)-L-threonyl-[EGF-like domain protein] + UDP + H(+). The enzyme catalyses 3-O-(alpha-L-fucosyl)-L-seryl-[EGF-like domain protein] + UDP-N-acetyl-alpha-D-glucosamine = 3-O-(N-acetyl-beta-D-glucosaminyl-(1-&gt;3)-alpha-L-fucosyl)-L-seryl-[EGF-like domain protein] + UDP + H(+). In terms of biological role, glycosyltransferase that initiates the elongation of O-linked fucose residues attached to EGF-like repeats in the extracellular domain of Notch molecules. Modulates NOTCH1 activity by modifying O-fucose residues at specific EGF-like domains resulting in enhancement of NOTCH1 activation by DLL1 and JAG1. May be involved in limb formation and in neurogenesis. This Mus musculus (Mouse) protein is Beta-1,3-N-acetylglucosaminyltransferase radical fringe.